The chain runs to 373 residues: Peptide chain release factor subunit 1 (373 aa).

The protein belongs to the eukaryotic release factor 1 family. Heterodimer of two subunits, one of which binds GTP.

It localises to the cytoplasm. Functionally, directs the termination of nascent peptide synthesis (translation) in response to the termination codons UAA, UAG and UGA. The protein is Peptide chain release factor subunit 1 (prf1) of Aeropyrum pernix (strain ATCC 700893 / DSM 11879 / JCM 9820 / NBRC 100138 / K1).